We begin with the raw amino-acid sequence, 858 residues long: MFTLAEVASLNDIQPTYRILKPWWDVFMDYLAVVMLMVAIFAGTMQLTKDQVVCLPVLPSPVNSKAHTPPGNAEVTTNIPKMEAATNQDQDGRTTNDISFGTSAVTPDIPLRATYPRTDFALPNQEAKKEKKDPTGRKTNLDFQQYVFINQMCYHLALPWYSKYFPYLALIHTIILMVSSNFWFKYPKTCSKVEHFVSILGKCFESPWTTKALSETACEDSEENKQRITGAQTLPKHVSTSSDEGSPSASTPMINKTGFKFSAEKPVIEVPSMTILDKKDGEQAKALFEKVRKFRAHVEDSDLIYKLYVVQTVIKTAKFIFILCYTANFVNAISFEHVCKPKVEHLIGYEVFECTHNMAYMLKKLLISYISIICVYGFICLYTLFWLFRIPLKEYSFEKVREESSFSDIPDVKNDFAFLLHMVDQYDQLYSKRFGVFLSEVSENKLREISLNHEWTFEKLRQHISRNAQDKQELHLFMLSGVPDAVFDLTDLDVLKLELIPEAKIPAKISQMTNLQELHLCHCPAKVEQTAFSFLRDHLRCLHVKFTDVAEIPAWVYLLKNLRELYLIGNLNSENNKMIGLESLRELRHLKILHVKSNLTKVPSNITDVAPHLTKLVIHNDGTKLLVLNSLKKMMNVAELELQNCELERIPHAIFSLSNLQELDLKSNNIRTIEEIISFQHLKRLTCLKLWHNKIVTIPPSITHVKNLESLYFSNNKLESLPVAVFSLQKLRCLDVSYNNISMIPIEIGLLQNLQHLHITGNKVDILPKQLFKCIKLRTLNLGQNCITSLPEKVGQLSQLTQLELKGNCLDRLPAQLGQCRMLKKSGLVVEDHLFDTLPLEVKEALNQDINIPFANGI.

Residues 1-22 (MFTLAEVASLNDIQPTYRILKP) are Cytoplasmic-facing. Residues 23 to 48 (WWDVFMDYLAVVMLMVAIFAGTMQLT) traverse the membrane as a helical segment. Residues 49 to 163 (KDQVVCLPVL…YHLALPWYSK (115 aa)) lie on the Extracellular side of the membrane. An intrachain disulfide couples Cys-54 to Cys-354. A helical transmembrane segment spans residues 164-182 (YFPYLALIHTIILMVSSNF). The Cytoplasmic segment spans residues 183–308 (WFKYPKTCSK…EDSDLIYKLY (126 aa)). A disordered region spans residues 221–251 (SEENKQRITGAQTLPKHVSTSSDEGSPSAST). Residues 227–251 (RITGAQTLPKHVSTSSDEGSPSAST) are compositionally biased toward polar residues. Residues Ser-241, Ser-242, and Ser-246 each carry the phosphoserine modification. Residues 309–328 (VVQTVIKTAKFIFILCYTAN) form a helical membrane-spanning segment. At 329 to 360 (FVNAISFEHVCKPKVEHLIGYEVFECTHNMAY) the chain is on the extracellular side. Residues 361-386 (MLKKLLISYISIICVYGFICLYTLFW) traverse the membrane as a helical segment. The Cytoplasmic segment spans residues 387–858 (LFRIPLKEYS…DINIPFANGI (472 aa)). LRR repeat units follow at residues 514 to 534 (NLQE…AFSF), 538 to 559 (HLRC…VYLL), 561 to 582 (NLRE…IGLE), 589 to 609 (HLKI…ITDV), 612 to 632 (HLTK…NSLK), 636 to 657 (NVAE…IFSL), 659 to 680 (NLQE…ISFQ), 684 to 705 (RLTC…ITHV), 707 to 728 (NLES…VFSL), 730 to 751 (KLRC…IGLL), 753 to 774 (NLQH…LFKC), 776 to 797 (KLRT…VGQL), and 799 to 820 (QLTQ…LGQC).

Belongs to the LRRC8 family. Heterohexamer; oligomerizes with other LRRC8 proteins (LRRC8A, LRRC8B, LRRC8C and/or LRRC8E) to form a heterohexamer. In vivo, the subunit composition may depend primarily on expression levels, and heterooligomeric channels containing various proportions of the different LRRC8 proteins may coexist.

It localises to the cell membrane. The protein resides in the endoplasmic reticulum membrane. It catalyses the reaction chloride(in) = chloride(out). The catalysed reaction is iodide(out) = iodide(in). The enzyme catalyses taurine(out) = taurine(in). In terms of biological role, non-essential component of the volume-regulated anion channel (VRAC, also named VSOAC channel), an anion channel required to maintain a constant cell volume in response to extracellular or intracellular osmotic changes. The VRAC channel conducts iodide better than chloride and can also conduct organic osmolytes like taurine. Plays a redundant role in the efflux of amino acids, such as aspartate, in response to osmotic stress. LRRC8A and LRRC8D are required for the uptake of the drug cisplatin. Channel activity requires LRRC8A plus at least one other family member (LRRC8B, LRRC8C, LRRC8D or LRRC8E); channel characteristics depend on the precise subunit composition. Also acts as a regulator of glucose-sensing in pancreatic beta cells: VRAC currents, generated in response to hypotonicity- or glucose-induced beta cell swelling, depolarize cells, thereby causing electrical excitation, leading to increase glucose sensitivity and insulin secretion. VRAC channels containing LRRC8D inhibit transport of immunoreactive cyclic dinucleotide GMP-AMP (2'-3'-cGAMP), an immune messenger produced in response to DNA virus in the cytosol. Mediates the import of the antibiotic blasticidin-S into the cell. This chain is Volume-regulated anion channel subunit LRRC8D, found in Homo sapiens (Human).